The sequence spans 261 residues: Tryptophan synthase alpha chain (261 aa).

Residues Glu-49 and Asp-60 each act as proton acceptor in the active site.

The protein belongs to the TrpA family. Tetramer of two alpha and two beta chains.

It carries out the reaction (1S,2R)-1-C-(indol-3-yl)glycerol 3-phosphate + L-serine = D-glyceraldehyde 3-phosphate + L-tryptophan + H2O. It functions in the pathway amino-acid biosynthesis; L-tryptophan biosynthesis; L-tryptophan from chorismate: step 5/5. Its function is as follows. The alpha subunit is responsible for the aldol cleavage of indoleglycerol phosphate to indole and glyceraldehyde 3-phosphate. The sequence is that of Tryptophan synthase alpha chain from Leifsonia xyli subsp. xyli (strain CTCB07).